The sequence spans 146 residues: Large ribosomal subunit protein uL15 (146 aa).

Positions 1-13 (MKLNELKPNEGSR) are enriched in basic and acidic residues. The tract at residues 1–54 (MKLNELKPNEGSRRNRKRVGRGTSSGYGKTAGRGQKGQLARTGGKTRLGFEGGQ) is disordered. Positions 23–35 (TSSGYGKTAGRGQ) are enriched in gly residues.

This sequence belongs to the universal ribosomal protein uL15 family. As to quaternary structure, part of the 50S ribosomal subunit.

Functionally, binds to the 23S rRNA. The sequence is that of Large ribosomal subunit protein uL15 from Lactobacillus johnsonii (strain CNCM I-12250 / La1 / NCC 533).